We begin with the raw amino-acid sequence, 129 residues long: MQSNISIYVLTVIGSCFYNPFILTYECRDDCCNGRYGPVPAPWKVLNCTKTGPGCPDSGYLLTTSENKTYCITGNETDKGNYPQTIGAIFPNCSGMNVGAGRLITRMLEEYPRGKSPSNNSINNIKISC.

It belongs to the intercrine beta (chemokine CC) family. Highly divergent.

This chain is Putative CC-type chemokine FPV061, found in Fowlpox virus (strain NVSL) (FPV).